The sequence spans 156 residues: Succinate dehydrogenase assembly factor 2-B, mitochondrial (156 aa).

Residues 1-24 (MLRQFIISTVGRRQPLLMILQSRL) constitute a mitochondrion transit peptide.

It belongs to the SDHAF2 family. Interacts with the flavoprotein subunit within the SDH catalytic dimer.

The protein resides in the mitochondrion matrix. Its function is as follows. Plays an essential role in the assembly of succinate dehydrogenase (SDH), an enzyme complex (also referred to as respiratory complex II) that is a component of both the tricarboxylic acid (TCA) cycle and the mitochondrial electron transport chain, and which couples the oxidation of succinate to fumarate with the reduction of ubiquinone (coenzyme Q) to ubiquinol. Required for flavinylation (covalent attachment of FAD) of the flavoprotein subunit of the SDH catalytic dimer. The chain is Succinate dehydrogenase assembly factor 2-B, mitochondrial from Drosophila yakuba (Fruit fly).